The sequence spans 86 residues: Large ribosomal subunit protein bL27 (86 aa).

Residues 1 to 26 (MAHKKAAGSTRNGRDSESKRLGVKRY) are disordered.

Belongs to the bacterial ribosomal protein bL27 family.

The chain is Large ribosomal subunit protein bL27 from Marinobacter nauticus (strain ATCC 700491 / DSM 11845 / VT8) (Marinobacter aquaeolei).